Reading from the N-terminus, the 303-residue chain is Hydroxyethylthiazole kinase (303 aa).

Residues 1-15 (MTTASTTPNSDTSNL) are compositionally biased toward polar residues. The tract at residues 1 to 23 (MTTASTTPNSDTSNLHEVAPDDP) is disordered. Residue Met-67 coordinates substrate. ATP is bound by residues Arg-142 and Ser-206. Gly-233 contacts substrate.

It belongs to the Thz kinase family. The cofactor is Mg(2+).

The enzyme catalyses 5-(2-hydroxyethyl)-4-methylthiazole + ATP = 4-methyl-5-(2-phosphooxyethyl)-thiazole + ADP + H(+). Its pathway is cofactor biosynthesis; thiamine diphosphate biosynthesis; 4-methyl-5-(2-phosphoethyl)-thiazole from 5-(2-hydroxyethyl)-4-methylthiazole: step 1/1. Catalyzes the phosphorylation of the hydroxyl group of 4-methyl-5-beta-hydroxyethylthiazole (THZ). The protein is Hydroxyethylthiazole kinase of Bifidobacterium animalis subsp. lactis (strain AD011).